A 376-amino-acid polypeptide reads, in one-letter code: Chaperone protein DnaJ (376 aa).

The region spanning 5 to 70 (DYYEILGVSK…QKRAAYDQYG (66 aa)) is the J domain. The CR-type zinc finger occupies 131-209 (GVTKEIRIPT…CHGHGRVERS (79 aa)). Residues Cys-144, Cys-147, Cys-161, Cys-164, Cys-183, Cys-186, Cys-197, and Cys-200 each contribute to the Zn(2+) site. 4 CXXCXGXG motif repeats span residues 144 to 151 (CDVCHGSG), 161 to 168 (CPTCHGSG), 183 to 190 (CPHCQGRG), and 197 to 204 (CNKCHGHG).

Belongs to the DnaJ family. In terms of assembly, homodimer. Requires Zn(2+) as cofactor.

The protein resides in the cytoplasm. Participates actively in the response to hyperosmotic and heat shock by preventing the aggregation of stress-denatured proteins and by disaggregating proteins, also in an autonomous, DnaK-independent fashion. Unfolded proteins bind initially to DnaJ; upon interaction with the DnaJ-bound protein, DnaK hydrolyzes its bound ATP, resulting in the formation of a stable complex. GrpE releases ADP from DnaK; ATP binding to DnaK triggers the release of the substrate protein, thus completing the reaction cycle. Several rounds of ATP-dependent interactions between DnaJ, DnaK and GrpE are required for fully efficient folding. Also involved, together with DnaK and GrpE, in the DNA replication of plasmids through activation of initiation proteins. The chain is Chaperone protein DnaJ from Shigella flexneri.